A 341-amino-acid chain; its full sequence is Dihydroorotate dehydrogenase (quinone) (341 aa).

Residues 62 to 66 and Thr-86 contribute to the FMN site; that span reads AGMDK. A substrate-binding site is contributed by Lys-66. Substrate is bound at residue 111–115; it reads NRMGF. The FMN site is built by Asn-139 and Asn-172. Asn-172 contacts substrate. Ser-175 functions as the Nucleophile in the catalytic mechanism. Asn-177 is a binding site for substrate. The FMN site is built by Lys-217 and Thr-245. Substrate is bound at residue 246 to 247; sequence NT. Residues Gly-268, Gly-297, and 318-319 contribute to the FMN site; that span reads YS.

Belongs to the dihydroorotate dehydrogenase family. Type 2 subfamily. Monomer. FMN serves as cofactor.

The protein localises to the cell membrane. It carries out the reaction (S)-dihydroorotate + a quinone = orotate + a quinol. It functions in the pathway pyrimidine metabolism; UMP biosynthesis via de novo pathway; orotate from (S)-dihydroorotate (quinone route): step 1/1. In terms of biological role, catalyzes the conversion of dihydroorotate to orotate with quinone as electron acceptor. The chain is Dihydroorotate dehydrogenase (quinone) from Shewanella loihica (strain ATCC BAA-1088 / PV-4).